The following is a 179-amino-acid chain: 5'-deoxynucleotidase VV1_0013 (179 aa).

H53 lines the a divalent metal cation pocket. Substrate-binding positions include 62 to 65 (DLPT) and D122. A divalent metal cation is bound at residue D122.

The protein belongs to the 5DNU family. Homodimer. The cofactor is a divalent metal cation.

It is found in the cytoplasm. The catalysed reaction is a 2'-deoxyribonucleoside 5'-phosphate + H2O = a 2'-deoxyribonucleoside + phosphate. Functionally, catalyzes the strictly specific dephosphorylation of 2'-deoxyribonucleoside 5'-monophosphates. The chain is 5'-deoxynucleotidase VV1_0013 from Vibrio vulnificus (strain CMCP6).